A 111-amino-acid chain; its full sequence is Aquaporin-2 (111 aa).

Over 1–6 (SIAFSR) the chain is Cytoplasmic. The chain crosses the membrane as a helical span at residues 7–27 (AVFSEFLATLLFVFFGLGSAL). Topologically, residues 28–37 (NWPSTVPIPT) are extracellular. Residues 38–56 (VLQISMAFGLAIGTLVQTL) traverse the membrane as a helical segment. Topologically, residues 57–61 (GHISG) are cytoplasmic. Positions 62 to 71 (AHINPAVTVA) form an intramembrane region, discontinuously helical. The NPA 1 motif lies at 65–67 (NPA). At 72 to 82 (CLVGCHVSFLR) the chain is on the cytoplasmic side. Residues 83–104 (ATFYVAAQLLGAVAGAALLHKL) traverse the membrane as a helical segment. Topologically, residues 105-111 (TPEDIRG) are extracellular.

This sequence belongs to the MIP/aquaporin (TC 1.A.8) family. In terms of assembly, homotetramer. In terms of processing, serine phosphorylation is necessary and sufficient for expression at the apical membrane. Endocytosis is not phosphorylation-dependent. Post-translationally, N-glycosylated.

The protein resides in the apical cell membrane. Its subcellular location is the basolateral cell membrane. It localises to the cell membrane. It is found in the cytoplasmic vesicle membrane. The protein localises to the golgi apparatus. The protein resides in the trans-Golgi network membrane. It catalyses the reaction H2O(in) = H2O(out). It carries out the reaction glycerol(in) = glycerol(out). Functionally, forms a water-specific channel that provides the plasma membranes of renal collecting duct with high permeability to water, thereby permitting water to move in the direction of an osmotic gradient. Plays an essential role in renal water homeostasis. Could also be permeable to glycerol. The polypeptide is Aquaporin-2 (Macroscelides proboscideus (Short-eared elephant shrew)).